Here is a 421-residue protein sequence, read N- to C-terminus: 5-hydroxytryptamine receptor 1A (421 aa).

Over 1 to 38 the chain is Extracellular; it reads MDMFSLGQGNNTTTSLEPFGTGGNDTGLSNVTFSYQVI. N-linked (GlcNAc...) asparagine glycosylation is found at Asn-10, Asn-11, Asn-24, and Asn-30. A helical transmembrane segment spans residues 39-59; it reads TSLLLGTLIFCAVLGNACVVA. Topologically, residues 60-73 are cytoplasmic; it reads AIALERSLQNVANY. Residues 74–98 traverse the membrane as a helical segment; it reads LIGSLAVTDLMVSVLVLPMAALYQV. Residues 99–107 are Extracellular-facing; it reads LNKWTLGQV. Residues 108 to 132 traverse the membrane as a helical segment; the sequence is TCDLFIALDVLCCTSSILHLCAIAL. Cys-109 and Cys-187 form a disulfide bridge. Residues Asp-116 and Cys-120 each contribute to the serotonin site. Residues 133 to 135 carry the DRY motif; important for ligand-induced conformation changes motif; that stretch reads DRY. Topologically, residues 133 to 152 are cytoplasmic; the sequence is DRYWAITDPIDYVNKRTPRR. A helical membrane pass occupies residues 153–174; it reads AAALISLTWLIGFLISIPPMLG. Residues 175-193 lie on the Extracellular side of the membrane; sequence WRTPEDRSNPNECTISKDH. A helical membrane pass occupies residues 194 to 216; that stretch reads GYTIYSTFGAFYIPLLLMLVLYG. Topologically, residues 217–346 are cytoplasmic; the sequence is RIFRAARFRI…LARERKTVKT (130 aa). Residues 237-268 are disordered; that stretch reads GAGTSFGTSSAPPPKKSLNGQPGSGDCRRSAE. Residues Thr-314, Lys-345, Thr-346, and Gly-352 each coordinate 1D-myo-inositol 4-phosphate. The chain crosses the membrane as a helical span at residues 347–370; sequence LGIIMGTFILCWLPFFIVALVLPF. Residues 371-378 lie on the Extracellular side of the membrane; it reads CESSCHMP. A helical transmembrane segment spans residues 379-403; it reads ELLGAIINWLGYSNSLLNPVIYAYF. Residues 396–400 carry the NPxxY motif; important for ligand-induced conformation changes and signaling motif; the sequence is NPVIY. Residues Phe-403, Asn-404, and Lys-405 each contribute to the 1D-myo-inositol 4-phosphate site. Over 404–421 the chain is Cytoplasmic; that stretch reads NKDFQNAFKKIIKCKFCR.

It belongs to the G-protein coupled receptor 1 family. 5-hydroxytryptamine receptor subfamily. HTR1A sub-subfamily. Heterodimer; heterodimerizes with GPER1. Interacts with YIF1B. Interacts with GPR39 and GALR1. Most abundantly expressed in midbrain, in dorsal raphe and hippocampus. Detected at lower levels in amygdala and brain cortex.

The protein resides in the cell membrane. It localises to the cell projection. Its subcellular location is the dendrite. G-protein coupled receptor activity is regulated by lipids: phosphatidylinositol 4-phosphate increases HTR1A-mediated activity. Plays a role in the regulation of dopamine and 5-hydroxytryptamine levels in the brain, and thereby affects neural activity, mood and behavior. Plays a role in the response to anxiogenic stimuli. In terms of biological role, G-protein coupled receptor for 5-hydroxytryptamine (serotonin). Also functions as a receptor for various drugs and psychoactive substances. Ligand binding causes a conformation change that triggers signaling via guanine nucleotide-binding proteins (G proteins) and modulates the activity of downstream effectors, such as adenylate cyclase. HTR1A is coupled to G(i)/G(o) G alpha proteins and mediates inhibitory neurotransmission: signaling inhibits adenylate cyclase activity and activates a phosphatidylinositol-calcium second messenger system that regulates the release of Ca(2+) ions from intracellular stores. Beta-arrestin family members regulate signaling by mediating both receptor desensitization and resensitization processes. In Mus musculus (Mouse), this protein is 5-hydroxytryptamine receptor 1A (Htr1a).